Here is a 44-residue protein sequence, read N- to C-terminus: Large ribosomal subunit protein bL34 (44 aa).

The protein belongs to the bacterial ribosomal protein bL34 family.

In Variovorax paradoxus (strain S110), this protein is Large ribosomal subunit protein bL34.